The sequence spans 206 residues: Ras-related protein Rab7 (206 aa).

Residues 15 to 22, 63 to 67, and 125 to 128 contribute to the GTP site; these read GDTGVGKT, DTAGQ, and NKID. S-geranylgeranyl cysteine attachment occurs at residues Cys-204 and Cys-206. Cysteine methyl ester is present on Cys-206.

This sequence belongs to the small GTPase superfamily. Rab family.

The protein localises to the cell membrane. In terms of biological role, protein transport. Probably involved in vesicular traffic. This chain is Ras-related protein Rab7, found in Vigna aconitifolia (Moth bean).